We begin with the raw amino-acid sequence, 429 residues long: MLYSRSVAKINGVSARQILDSRGRPTVEAVVSLSDGALGVVSVPSGASVGKNEALELRDKDMNKYGGHGVTKAVENVNSIIAPRLVNTDPFNQKALDDLLIELDGTDNKSRLGANATLAVSVATAKAAAASLKLPLYRYIGGVASREMPVPLVNVINGGLHADNGLDFQEFMIMPIGASTFSDALRMCAEVFLSLKEILKSNKLSTNTGDEGGFAPNLESNDRVFCILLEAIEKAGYKPSIDFALALDVAASTFYDGKIYKFSGSSMSSAEMVSYYEELVKKYPIISIEDGIAEDDLAGWKELTVRLGKKVQLVGDDLFVTNPRLIKDFSERGLANAVLIKPNQIGTLSETIEAIRLASMSNFNSIVSHRSGDTEDPFIAHIAVALNCGQIKTGSMSRSERMAKYNELLRIEEDLCGTAILRSVKIGRH.

Residue Gln-169 coordinates (2R)-2-phosphoglycerate. The active-site Proton donor is the Glu-211. Mg(2+)-binding residues include Asp-248, Glu-289, and Asp-316. (2R)-2-phosphoglycerate contacts are provided by Lys-341, Arg-370, Ser-371, and Lys-392. Lys-341 serves as the catalytic Proton acceptor.

It belongs to the enolase family. The cofactor is Mg(2+).

It is found in the cytoplasm. The protein resides in the secreted. It localises to the cell surface. It carries out the reaction (2R)-2-phosphoglycerate = phosphoenolpyruvate + H2O. It participates in carbohydrate degradation; glycolysis; pyruvate from D-glyceraldehyde 3-phosphate: step 4/5. Its function is as follows. Catalyzes the reversible conversion of 2-phosphoglycerate (2-PG) into phosphoenolpyruvate (PEP). It is essential for the degradation of carbohydrates via glycolysis. This is Enolase from Anaplasma phagocytophilum (strain HZ).